We begin with the raw amino-acid sequence, 95 residues long: Corticostatin-3 (95 aa).

The signal sequence occupies residues M1–A19. A propeptide spanning residues E20 to G62 is cleaved from the precursor. 3 cysteine pairs are disulfide-bonded: C65–C93, C67–C82, and C72–C92.

The protein belongs to the alpha-defensin family.

The protein resides in the secreted. Functionally, this peptide has antibiotic, anti-fungi and antiviral activity. It also inhibits corticotropin (ACTH) stimulated corticosterone production. This Oryctolagus cuniculus (Rabbit) protein is Corticostatin-3.